A 174-amino-acid polypeptide reads, in one-letter code: Inactive signal peptidase IA (174 aa).

Topologically, residues 1–7 are cytoplasmic; that stretch reads MKKVVKY. The helical transmembrane segment at 8–28 threads the bilayer; it reads LISLILAIIIVLFVQTFVIVG. Residues 29-174 lie on the Extracellular side of the membrane; the sequence is HVIPNNDMSP…FSKWTIQFKS (146 aa).

It belongs to the peptidase S26 family.

It localises to the cell membrane. Functionally, catalytically inactive. This is Inactive signal peptidase IA (spsA) from Staphylococcus aureus (strain MRSA252).